The primary structure comprises 299 residues: ATP phosphoribosyltransferase (299 aa).

The protein belongs to the ATP phosphoribosyltransferase family. Long subfamily. Equilibrium between an active dimeric form, an inactive hexameric form and higher aggregates. Interconversion between the various forms is largely reversible and is influenced by the natural substrates and inhibitors of the enzyme. Mg(2+) is required as a cofactor.

The protein resides in the cytoplasm. The catalysed reaction is 1-(5-phospho-beta-D-ribosyl)-ATP + diphosphate = 5-phospho-alpha-D-ribose 1-diphosphate + ATP. It functions in the pathway amino-acid biosynthesis; L-histidine biosynthesis; L-histidine from 5-phospho-alpha-D-ribose 1-diphosphate: step 1/9. Its activity is regulated as follows. Feedback inhibited by histidine. Functionally, catalyzes the condensation of ATP and 5-phosphoribose 1-diphosphate to form N'-(5'-phosphoribosyl)-ATP (PR-ATP). Has a crucial role in the pathway because the rate of histidine biosynthesis seems to be controlled primarily by regulation of HisG enzymatic activity. The protein is ATP phosphoribosyltransferase of Erwinia tasmaniensis (strain DSM 17950 / CFBP 7177 / CIP 109463 / NCPPB 4357 / Et1/99).